The primary structure comprises 1997 residues: Nucleoprotein TPR (1997 aa).

Coiled-coil stretches lie at residues 1-36 (QEQHSQLEAAKTQVEKDMGEKISNLERELENANDLL), 101-277 (EIVK…HQMT), 335-1103 (DSTE…IKTI), and 1129-1305 (AEAS…EPQE). Basic and acidic residues-rich tracts occupy residues 672 to 702 (SSEYQSQLEKKMMESEKEKQELRDEKHKTVE) and 1290 to 1305 (REQQERHHEQRDEPQE). Disordered stretches follow at residues 672–706 (SSEYQSQLEKKMMESEKEKQELRDEKHKTVEQMEQ), 1290–1352 (REQQ…AAVP), 1438–1529 (AFVQ…KTET), 1561–1752 (IQTS…RRQS), 1795–1832 (AIHSPQVAGVPRFRFGPPEDMPQASSSHSDLGQLASQG), and 1870–1997 (ENPA…RSNI). Polar residues-rich tracts occupy residues 1306-1321 (TTRIPQQRQITLQPTT), 1328-1347 (SANTSEPPTANIKPTPSKVT), and 1446-1487 (SHAT…SSSI). The segment covering 1511–1529 (DQQRTKKRKEEDIEEKTET) has biased composition (basic and acidic residues). Positions 1561–1587 (IQTSQVIESQAPEQLQNVQSTQDSLQD) are enriched in polar residues. Acidic residues-rich tracts occupy residues 1601–1637 (SDEENEDEQEGYEEEEQEDEEEDEDDAGIGEGDDSNE) and 1644–1667 (GNEDYEGDDAEEADGTDPDTETED). 3 stretches are compositionally biased toward polar residues: residues 1692 to 1709 (AESTFSQETREQPSSASD), 1817 to 1830 (QASSSHSDLGQLAS), and 1879 to 1899 (HASQSVPMVTTSTGNVPTSVD). Positions 1902–1915 (AADEGDEVFVEAES) are enriched in acidic residues. Low complexity predominate over residues 1950 to 1959 (SSSIADTSSS).

It belongs to the TPR family. As to quaternary structure, homodimer. Part of the nuclear pore complex (NPC). Interacts with nuclear receptor KPNB1; the interaction occurs in a RanGTP-dependent manner. Associates with the Importin alpha/Importin beta receptor. As to expression, expressed in epithelial cells, oocytes and egg (at protein level).

The protein resides in the nucleus. It localises to the nucleus membrane. The protein localises to the nucleus envelope. It is found in the nuclear pore complex. Its subcellular location is the cytoplasm. The protein resides in the cytoskeleton. It localises to the spindle. The protein localises to the chromosome. It is found in the centromere. Its subcellular location is the kinetochore. Functionally, component of the nuclear pore complex (NPC), a complex required for the trafficking across the nuclear envelope. Functions as a scaffolding element in the nuclear phase of the NPC essential for normal nucleocytoplasmic transport of proteins and mRNAs, plays a role in the establishment of nuclear-peripheral chromatin compartmentalization in interphase, and in the mitotic spindle checkpoint signaling during mitosis. Involved in the quality control and retention of unspliced mRNAs in the nucleus. Implicated in nuclear export of mRNAs transcribed from heat shock gene promoters. May play a limited role in the regulation of nuclear protein export. May be involved in the formation and/or maintenance of NPC-associated perinuclear heterochromatin exclusion zones (HEZs). Finally, may act as a spatial regulator of the spindle-assembly checkpoint (SAC) response. This Xenopus laevis (African clawed frog) protein is Nucleoprotein TPR.